We begin with the raw amino-acid sequence, 106 residues long: ATP synthase-coupling factor 6, mitochondrial (106 aa).

Belongs to the eukaryotic ATPase subunit F6 family. As to quaternary structure, F-type ATPases have 2 components, CF(1) - the catalytic core - and CF(0) - the membrane proton channel. CF(0) seems to have nine subunits: a, b, c, d, e, f, g, F6 and 8 (or A6L).

Its subcellular location is the mitochondrion. The protein localises to the mitochondrion inner membrane. In terms of biological role, mitochondrial membrane ATP synthase (F(1)F(0) ATP synthase or Complex V) produces ATP from ADP in the presence of a proton gradient across the membrane which is generated by electron transport complexes of the respiratory chain. F-type ATPases consist of two structural domains, F(1) - containing the extramembraneous catalytic core and F(0) - containing the membrane proton channel, linked together by a central stalk and a peripheral stalk. During catalysis, ATP synthesis in the catalytic domain of F(1) is coupled via a rotary mechanism of the central stalk subunits to proton translocation. Part of the complex F(0) domain and the peripheric stalk, which acts as a stator to hold the catalytic alpha(3)beta(3) subcomplex and subunit a/ATP6 static relative to the rotary elements. The polypeptide is ATP synthase-coupling factor 6, mitochondrial (Drosophila melanogaster (Fruit fly)).